A 425-amino-acid chain; its full sequence is ATP-dependent RNA helicase eIF4A (425 aa).

The Q motif signature appears at 38 to 66; it reads DTWEDYGLKEDLLKGIYSIGFETPSFIQK. A Helicase ATP-binding domain is found at 69-241; it reads IQPIIDGRDI…EEILINPVII (173 aa). Residue 82-89 participates in ATP binding; it reads AQSGTGKT. The DEAD box signature appears at 187–190; that stretch reads DEAD. The Helicase C-terminal domain occupies 252–425; sequence GIRQYFIDLR…KELPADFSFQ (174 aa).

The protein belongs to the DEAD box helicase family. eIF4A subfamily. In terms of assembly, component of the eIF4F complex, which composition varies with external and internal environmental conditions. It is composed of at least eIF4A, eIF4E and eIF4G.

The protein localises to the cytoplasm. It catalyses the reaction ATP + H2O = ADP + phosphate + H(+). In terms of biological role, ATP-dependent RNA helicase which is a subunit of the eIF4F complex involved in cap recognition and is required for mRNA binding to ribosome. In the current model of translation initiation, eIF4A unwinds RNA secondary structures in the 5'-UTR of mRNAs which is necessary to allow efficient binding of the small ribosomal subunit, and subsequent scanning for the initiator codon. The chain is ATP-dependent RNA helicase eIF4A (TIF1) from Encephalitozoon cuniculi (strain GB-M1) (Microsporidian parasite).